Here is a 577-residue protein sequence, read N- to C-terminus: Cell adhesion molecule CEACAM20 (577 aa).

Residues 1–30 form the signal peptide; sequence MELAGFHCCSWTVILLSALLPTTWRPPAAA. At 31–430 the chain is on the extracellular side; sequence HFIHRADLLS…LQSSSMSPGA (400 aa). 4 consecutive Ig-like C2-type domains span residues 48 to 137, 142 to 223, 239 to 324, and 329 to 415; these read PLAK…ASLT, PDPV…TNLS, PNIE…LKLT, and PDQV…ASVL. Cysteine 72 and cysteine 120 are disulfide-bonded. Asparagine 78 and asparagine 102 each carry an N-linked (GlcNAc...) asparagine glycan. Disulfide bonds link cysteine 259–cysteine 307 and cysteine 358–cysteine 399. An N-linked (GlcNAc...) asparagine glycan is attached at asparagine 289. A helical transmembrane segment spans residues 431 to 451; sequence IAGIVIGILVAIALAIGLGYF. At 452-577 the chain is on the cytoplasmic side; the sequence is LYSTKDRWTR…SLYCKITPSA (126 aa). The segment at 461–568 is disordered; that stretch reads RRRSASDTTS…YEKLLNSNHS (108 aa). A compositionally biased stretch (polar residues) spans 474–484; sequence IPPTSVMQSTP. Positions 516–526 are enriched in basic and acidic residues; that stretch reads DSPEQFYEKKP. Residues 536-551 show a composition bias toward pro residues; it reads KPLPQIPKQPLMPPGP. 2 positions are modified to phosphotyrosine: tyrosine 559 and tyrosine 570.

This sequence belongs to the immunoglobulin superfamily. CEA family. As to quaternary structure, interacts (via extracellular domain) with PTPRH (via extracellular domain); the interaction dephosphorylates CEACAM20. Interacts (phosphorylated form) with SYK (via SH2 domains); the interaction further enhances CEACAM20 phosphorylation. Post-translationally, phosphorylated on tyrosine residues by SYK, SRC and FYN in vitro. As to expression, strongly expressed in the small intestine and colon (at protein level). Minimal expression in other tissues (at protein level). Highly expressed in cecum, colon, ileum, jejunum, and testis, and also detected at lower levels in salivary gland and thymus.

The protein localises to the cell projection. It localises to the microvillus membrane. The protein resides in the apical cell membrane. Its function is as follows. Together with the tyrosine-protein kinase SYK, enhances production of the cytokine CXCL8/IL-8 via the NFKB pathway and may thus have a role in the intestinal immune response. In Mus musculus (Mouse), this protein is Cell adhesion molecule CEACAM20.